A 549-amino-acid polypeptide reads, in one-letter code: MSTAANEPSRSRGKAPAGERVADWADGRLGIYSLAKANMRKIFPDHWSFMLGEVCLYSFIIIILTGVYLTLFFHPSMAEVEYHGSYVPLQGQMMSEAYASTLDISFDVRGGLLIRQIHHWAALIFLAGMFVHMMRVFFTGAFRKPREVNWLFGFLLLVLGMFTGFTGYSLPDDLLSGTGIRFMEGAILSVPIVGTYISFFLFGGEFPGHDFVSRFYSIHILLLPGIMLGLLVGHLILVFYHKHTQFAGPGKTNKNVVGMPLLPVYTAKAGGFFFLVFGVISVVSAIATINPIWPSGPTGPTRSPPAPSRLVLGFSEGLIRVMPGWEINAWGHTLVLGVFVPLLIFPLVLAAIAVYPFIESWVTGYKREHYILDRPLLDRPRNAPTRTAFGVAWLTVYFVLLIGGGNDLWATHFHLSINAITWFVRIAFFVGPVVAFIATKRICLGLQRRDKDKVLHGRESAIIKRLPHGEFIEVHEPISQEQLHTLTAHEQYKPAEIGPTVDENGVERKVSGTQKLRAKLSESYYGEESQIPKPTVEEYKEITSGHGHH.

A helical membrane pass occupies residues 54–74; sequence VCLYSFIIIILTGVYLTLFFH. Residues His118 and His132 each contribute to the heme site. Transmembrane regions (helical) follow at residues 122–142, 150–170, and 182–202; these read ALIF…TGAF, WLFG…GYSL, and FMEG…FFLF. 2 residues coordinate heme: His219 and His234. 5 helical membrane passes run 220–240, 269–289, 334–354, 389–409, and 417–437; these read ILLL…LVFY, AGGF…IATI, LVLG…AIAV, FGVA…NDLW, and INAI…VAFI.

The protein belongs to the cytochrome b family. In terms of assembly, the cytochrome bc1 complex is composed of a cytochrome b (QcrB), the Rieske iron-sulfur protein (QcrA) and a diheme cytochrome c (QcrC) subunit. Heme serves as cofactor.

It localises to the cell membrane. It carries out the reaction a quinol + 2 Fe(III)-[cytochrome c](out) = a quinone + 2 Fe(II)-[cytochrome c](out) + 2 H(+)(out). In terms of biological role, cytochrome b subunit of the cytochrome bc1 complex, an essential component of the respiratory electron transport chain required for ATP synthesis. The bc1 complex catalyzes the oxidation of ubiquinol and the reduction of cytochrome c in the respiratory chain. The bc1 complex operates through a Q-cycle mechanism that couples electron transfer to generation of the proton gradient that drives ATP synthesis. The cytochrome b subunit contains two ubiquinol reactive sites: the oxidation (QP) site and the reduction (QN) site. In Streptomyces lividans, this protein is Cytochrome bc1 complex cytochrome b subunit (qcrB).